Here is a 543-residue protein sequence, read N- to C-terminus: Ribonuclease Y (543 aa).

A helical transmembrane segment spans residues 4–24 (IIMIPVATAIVSLLVGTVTGY). Residues 233–296 (TVSVVDLPNE…EIAKRAMERL (64 aa)) form the KH domain. The 94-residue stretch at 359 to 452 (VLSHSIEVGK…VVAADTISSA (94 aa)) folds into the HD domain.

Belongs to the RNase Y family.

It is found in the cell membrane. Functionally, endoribonuclease that initiates mRNA decay. In Lactobacillus acidophilus (strain ATCC 700396 / NCK56 / N2 / NCFM), this protein is Ribonuclease Y.